Consider the following 82-residue polypeptide: Small ribosomal subunit protein bS18 (82 aa).

It belongs to the bacterial ribosomal protein bS18 family. Part of the 30S ribosomal subunit. Forms a tight heterodimer with protein bS6.

Binds as a heterodimer with protein bS6 to the central domain of the 16S rRNA, where it helps stabilize the platform of the 30S subunit. The chain is Small ribosomal subunit protein bS18 from Chlamydia felis (strain Fe/C-56) (Chlamydophila felis).